The chain runs to 230 residues: 2-C-methyl-D-erythritol 4-phosphate cytidylyltransferase (230 aa).

This sequence belongs to the IspD/TarI cytidylyltransferase family. IspD subfamily.

It catalyses the reaction 2-C-methyl-D-erythritol 4-phosphate + CTP + H(+) = 4-CDP-2-C-methyl-D-erythritol + diphosphate. It participates in isoprenoid biosynthesis; isopentenyl diphosphate biosynthesis via DXP pathway; isopentenyl diphosphate from 1-deoxy-D-xylulose 5-phosphate: step 2/6. Functionally, catalyzes the formation of 4-diphosphocytidyl-2-C-methyl-D-erythritol from CTP and 2-C-methyl-D-erythritol 4-phosphate (MEP). This chain is 2-C-methyl-D-erythritol 4-phosphate cytidylyltransferase, found in Synechocystis sp. (strain ATCC 27184 / PCC 6803 / Kazusa).